A 61-amino-acid polypeptide reads, in one-letter code: uncharacterized protein (61 aa).

This is an uncharacterized protein from Escherichia coli (Bacteriophage T4).